The following is a 298-amino-acid chain: Probable GTP 3',8-cyclase (298 aa).

A Radical SAM core domain is found at 4 to 227; that stretch reads RYGREIRSFR…MQNRKKYLID (224 aa). R13 is a binding site for GTP. Residues C20 and C24 each coordinate [4Fe-4S] cluster. An S-adenosyl-L-methionine-binding site is contributed by Y26. C27 serves as a coordination point for [4Fe-4S] cluster. Residue K61 coordinates GTP. G65 lines the S-adenosyl-L-methionine pocket. T91 provides a ligand contact to GTP. An S-adenosyl-L-methionine-binding site is contributed by S115. GTP is bound at residue K152. Residues C243 and C246 each coordinate [4Fe-4S] cluster. 248 to 250 contacts GTP; it reads RIR. C260 is a [4Fe-4S] cluster binding site.

This sequence belongs to the radical SAM superfamily. MoaA family. It depends on [4Fe-4S] cluster as a cofactor.

The enzyme catalyses GTP + AH2 + S-adenosyl-L-methionine = (8S)-3',8-cyclo-7,8-dihydroguanosine 5'-triphosphate + 5'-deoxyadenosine + L-methionine + A + H(+). It functions in the pathway cofactor biosynthesis; molybdopterin biosynthesis. Catalyzes the cyclization of GTP to (8S)-3',8-cyclo-7,8-dihydroguanosine 5'-triphosphate. This chain is Probable GTP 3',8-cyclase, found in Methanococcus maripaludis (strain C5 / ATCC BAA-1333).